A 573-amino-acid chain; its full sequence is Zinc finger protein 10 (573 aa).

One can recognise a KRAB domain in the interval 14-85; it reads VTFKDVFVDF…EREIHQETHP (72 aa). The segment at 206-232 adopts a C2H2-type 1; atypical zinc-finger fold; the sequence is DSCASNSNECGQTFCQNIHLIQFARTH. 9 consecutive C2H2-type zinc fingers follow at residues 265–287, 293–315, 321–343, 349–371, 377–399, 405–427, 433–455, 461–483, and 489–511; these read YECKECGKFFSWRSNLTRHQLIH, YECKECGKSFSRSSHLIGHQKTH, YECKECGKSFSWFSHLVTHQRTH, YTCNQCGKSFVHSSRLIRHQRTH, YECPECGKSFRQSTHLILHQRTH, YECNECGKSYSQRSHLVVHHRIH, FECKDCGKCFSRSSHLYSHQRTH, YECHDCGKSFSQSSALIVHQRIH, and YECCQCGKAFIRKNDLIKHQRIH. A C2H2-type 11; atypical zinc finger spans residues 517-539; that stretch reads YKCNQCGIIFSQNSPFIVHQIAH.

This sequence belongs to the krueppel C2H2-type zinc-finger protein family. As to quaternary structure, interacts (via the KRAB domain) with TRIM28 (via the RBCC domain).

The protein resides in the nucleus. Functionally, may be involved in transcriptional regulation. In Homo sapiens (Human), this protein is Zinc finger protein 10 (ZNF10).